Here is a 453-residue protein sequence, read N- to C-terminus: Putative folate transporter 2 (453 aa).

Helical transmembrane passes span 41–64 (IVVY…YYLF), 76–96 (SLIL…ALIT), 108–126 (PYLF…SLAL), 132–156 (IQAT…EALV), 176–195 (IASK…YFLE), 201–220 (YIFM…CLFL), 241–260 (FINT…YMSG), 280–300 (SFMG…IIVY), 312–330 (TLIF…PIIL), 346–366 (VLSG…PLFI), and 416–437 (LSMY…VPLL).

The protein belongs to the major facilitator superfamily. Folate-biopterin transporter (TC 2.A.71) family.

The protein resides in the plastid. Its subcellular location is the apicoplast. It localises to the membrane. Putative folate transporter. Required for sporogony of malaria parasites and host switching. In Plasmodium berghei (strain Anka), this protein is Putative folate transporter 2.